Here is a 183-residue protein sequence, read N- to C-terminus: Adenine phosphoribosyltransferase (183 aa).

The protein belongs to the purine/pyrimidine phosphoribosyltransferase family. In terms of assembly, homodimer.

The protein localises to the cytoplasm. The enzyme catalyses AMP + diphosphate = 5-phospho-alpha-D-ribose 1-diphosphate + adenine. It participates in purine metabolism; AMP biosynthesis via salvage pathway; AMP from adenine: step 1/1. In terms of biological role, catalyzes a salvage reaction resulting in the formation of AMP, that is energically less costly than de novo synthesis. The chain is Adenine phosphoribosyltransferase from Shewanella oneidensis (strain ATCC 700550 / JCM 31522 / CIP 106686 / LMG 19005 / NCIMB 14063 / MR-1).